We begin with the raw amino-acid sequence, 157 residues long: Transcription elongation factor GreA (157 aa).

A coiled-coil region spans residues Arg-13 to Gln-75.

The protein belongs to the GreA/GreB family.

Functionally, necessary for efficient RNA polymerase transcription elongation past template-encoded arresting sites. The arresting sites in DNA have the property of trapping a certain fraction of elongating RNA polymerases that pass through, resulting in locked ternary complexes. Cleavage of the nascent transcript by cleavage factors such as GreA or GreB allows the resumption of elongation from the new 3'terminus. GreA releases sequences of 2 to 3 nucleotides. This is Transcription elongation factor GreA from Roseiflexus castenholzii (strain DSM 13941 / HLO8).